Here is a 383-residue protein sequence, read N- to C-terminus: Probable 2-succinylbenzoate--CoA ligase (383 aa).

This sequence belongs to the ATP-dependent AMP-binding enzyme family. MenE subfamily.

The enzyme catalyses 2-succinylbenzoate + ATP + CoA = 2-succinylbenzoyl-CoA + AMP + diphosphate. It participates in quinol/quinone metabolism; 1,4-dihydroxy-2-naphthoate biosynthesis; 1,4-dihydroxy-2-naphthoate from chorismate: step 5/7. Its pathway is quinol/quinone metabolism; menaquinone biosynthesis. Its function is as follows. Converts 2-succinylbenzoate (OSB) to 2-succinylbenzoyl-CoA (OSB-CoA). May be involved in the biosynthesis of menaquinone. In Mycobacterium tuberculosis (strain CDC 1551 / Oshkosh), this protein is Probable 2-succinylbenzoate--CoA ligase (menE).